We begin with the raw amino-acid sequence, 1849 residues long: NADH-ubiquinone oxidoreductase chain 5 (1849 aa).

41 helical membrane passes run 76-93 (YLLLYYCIYALELYTVCY), 98-120 (LILLYLIQLNYILLTNIVGYLQY), 190-212 (YWLCVVIWNNIGWWTYQLMIIGW), 222-244 (LVPTILAIINLILTYIDLIIYLY), 279-301 (HLLTVIIPNYCLAIYNSGLILSS), 316-338 (LALQYLVAPLYISCSLLIYILCY), 358-380 (LEIIYLDILVNSLISIIILILSV), 390-412 (VIILSQYINIISGYVAMPTTILI), 419-441 (IAVYIYYLVDYIATISTLIIWLL), 483-505 (LLDAIMNVVTSVILLITVSCLGV), 510-532 (LFIAVYPVYCIGVLLLNTLLQVV), 536-558 (ISYIIGTFMNAIILICDIYVYSI), 565-587 (LIMYVYFVAAIILEPIIDIIHTI), 621-640 (IWLIADLILAYIDLIRSTLV), 683-705 (WVRFLIYCAGNNINLLVLLYVQF), 718-740 (LTRIQLYATIPVIISSYIYQGIL), 745-767 (IISYYNTLLVATLEFIQIWLTIL), 797-819 (PTWVLFECLSTCVGLVELYLVTV), 868-890 (ILLLMSSGLQSTVLNTIFDLLSL), 905-927 (LTVQVCTIPAALYSTIIYPYIVL), 966-988 (LYSYNLYLLELYNIYYFWLSLLE), 1008-1030 (PDLLISLISYIIDICILSLELLL), 1073-1095 (LTVVFYILNLCGILNEISIQILF), 1105-1127 (LATIYCTVVLPYILIILEILSYL), 1172-1194 (TYLLYIVLEQLLLVIIDLYIYII), 1219-1241 (VYFLYFMIFIGYLLCGIFAFFYH), 1248-1270 (GIFYLSEMIIMGILIFSIVTLYY), 1296-1318 (IITFDILSILGVLLVATLTAIIL), 1330-1352 (FAYNVLATLVLFSASIICFIVSY), 1357-1379 (MIIFWEISGTLSLFLIDMYYARI), 1418-1440 (LFALLPYAQFNLSILGNLIFDFT), 1444-1466 (VIVFSIFSAAACKCAQFLLFVWL), 1478-1500 (ALIHSSTLVVMGIFMILRFAPIL), 1504-1526 (VYTLYIMSILGSLTVAYGAILAT), 1533-1555 (KAVAYSTISQIGYLFTGCAFLAF), 1559-1581 (LIYLILHAICKALLFVLVGYIVH), 1602-1624 (IAIYMFILCMVLAGAPYTVGFFA), 1639-1661 (VATFIICCWIISFACTPFYLYRI), 1719-1741 (LLHLLLLLIVLFCGEFLVFLVTG), 1773-1795 (VRNIQLLIIVLFALVTLYITAIN), and 1802-1824 (IIYLSVVLPILAIIFICLGHYFL).

It belongs to the complex I subunit 5 family.

It localises to the hydrogenosome membrane. It catalyses the reaction a ubiquinone + NADH + 5 H(+)(in) = a ubiquinol + NAD(+) + 4 H(+)(out). This chain is NADH-ubiquinone oxidoreductase chain 5 (nad5), found in Nyctotherus ovalis.